A 1011-amino-acid polypeptide reads, in one-letter code: Cell division cycle-associated protein 2 (1011 aa).

A compositionally biased stretch (polar residues) spans 1 to 22 (MDTCSQESEPLQTKESPINNAG). Positions 1–26 (MDTCSQESEPLQTKESPINNAGKTPL) are disordered. A phosphoserine mark is found at serine 125, serine 130, serine 209, serine 293, and serine 310. Threonine 313 carries the phosphothreonine modification. The 61-residue stretch at 380-440 (KRKRVTFGED…PEWLPQPNFD (61 aa)) folds into the PP1-binding domain. A phosphoserine mark is found at serine 391 and serine 398. 2 disordered regions span residues 395-438 (LDES…PQPN) and 522-544 (PCKE…KVLP). The residue at position 403 (threonine 403) is a Phosphothreonine. The segment covering 418–431 (SSLSPPLLEQSPVP) has biased composition (low complexity). Serine 428 carries the post-translational modification Phosphoserine. The span at 522–543 (PCKEKKTNRRKSQESKHADKVL) shows a compositional bias: basic and acidic residues. Phosphoserine occurs at positions 583, 702, and 747. Lysine 753 participates in a covalent cross-link: Glycyl lysine isopeptide (Lys-Gly) (interchain with G-Cter in SUMO2). Basic and acidic residues predominate over residues 790–803 (DQRKVSKSQGEDLG). Disordered stretches follow at residues 790 to 835 (DQRK…GLHL) and 896 to 1011 (GLVW…LSEN). Residues 931 to 945 (SSRQDPCTLPSTSSE) are compositionally biased toward polar residues. Serine 967 is subject to Phosphoserine. The segment covering 968-983 (FCTSTLANPKSTTQSR) has biased composition (polar residues). Over residues 993–1011 (QKRENTLQETSRESDLSEN) the composition is skewed to basic and acidic residues.

Interacts with PPP1CC. In terms of processing, phosphorylated by CDK1. May regulate its subcellular location.

It is found in the nucleus. In terms of biological role, regulator of chromosome structure during mitosis required for condensin-depleted chromosomes to retain their compact architecture through anaphase. Acts by mediating the recruitment of phopsphatase PP1-gamma subunit (PPP1CC) to chromatin at anaphase and into the following interphase. At anaphase onset, its association with chromatin targets a pool of PPP1CC to dephosphorylate substrates. The chain is Cell division cycle-associated protein 2 (CDCA2) from Bos taurus (Bovine).